The primary structure comprises 240 residues: MAATTGNIIKFEENADSKDLLEQCLNCSDVGVVSNTVRNMDGTIAADLARTLIPAMLINMQPSLAIWLHWIIVTHGGYLTTVMDLQDSLVQLHEKLVQSAHLMTKIFSLSGKLNMVLSQEEMRQRRLDFSSEDGEEEEENDYIDEDVDEAGYDIEVVDEAENDDMDNDLEANADAFDESNLEASLSPNAELSPRKSHIDHDFVIPEDEMLSEEEEQEVEKQILPKFVVPESPRKTSRKSR.

Disordered stretches follow at residues 125 to 148 and 177 to 240; these read RRLDFSSEDGEEEEENDYIDEDVD and DESN…RKSR. A compositionally biased stretch (acidic residues) spans 130–148; sequence SSEDGEEEEENDYIDEDVD. The span at 192-203 shows a compositional bias: basic and acidic residues; sequence SPRKSHIDHDFV. Acidic residues predominate over residues 204–217; it reads IPEDEMLSEEEEQE. Phosphoserine is present on serine 231.

This sequence belongs to the UTP5 family.

It localises to the cytoplasm. The protein resides in the nucleus. This is an uncharacterized protein from Schizosaccharomyces pombe (strain 972 / ATCC 24843) (Fission yeast).